The following is a 510-amino-acid chain: Facilitated glucose transporter protein 1 (510 aa).

The disordered stretch occupies residues 1 to 29; sequence MSEKSRSDTSATASLSDSSKSPSSYSTPG. At 1-46 the chain is on the cytoplasmic side; the sequence is MSEKSRSDTSATASLSDSSKSPSSYSTPGTTTQKIIFPDGKLTKCL. Over residues 8–29 the composition is skewed to low complexity; the sequence is DTSATASLSDSSKSPSSYSTPG. A helical membrane pass occupies residues 47-67; sequence AFSAFVITLASFQFGYHIGCV. Topologically, residues 68–100 are extracellular; it reads NAPGGLITEWIIGSHKDLFDKELSRENADLAWS. Residues 101-121 form a helical membrane-spanning segment; sequence VAVSVFAVGGMIGGLSSGWLA. Residues 122–127 lie on the Cytoplasmic side of the membrane; the sequence is DKVGRR. A helical transmembrane segment spans residues 128 to 146; it reads GALFYNNLLALAAAALMGL. Residues 147–160 are Extracellular-facing; it reads AKSVGAYPMVILGR. A helical membrane pass occupies residues 161–181; the sequence is LIIGLNCGFSSALVPMFLTEI. Residues 182-195 are Cytoplasmic-facing; that stretch reads SPNNLRGMLGSLHQ. Residue Gln-195 coordinates D-glucose. A helical transmembrane segment spans residues 196–216; that stretch reads LLVTIAILVSQIFGLPHLLGT. The Extracellular portion of the chain corresponds to 217–219; the sequence is GDR. Residues 220–240 traverse the membrane as a helical segment; sequence WPLIFAFTVVPAVLQLALLML. At 241–299 the chain is on the cytoplasmic side; the sequence is CPESPKYTMAVRGQRNEAESALKKLRDTEDVSTEIEAMQEEATAAGVQEKPKMGDMFKG. Residues 300 to 320 form a helical membrane-spanning segment; that stretch reads ALLWPMSIAIMMMLAQQLSGI. D-glucose-binding positions include 315–316, Asn-321, and Asn-352; that span reads QQ. The Extracellular portion of the chain corresponds to 321 to 341; sequence NVAMFYSTVIFRGAGLTGNEP. A helical membrane pass occupies residues 342-362; that stretch reads FYATIGMGAVNVIMTLISVWL. Over 363-373 the chain is Cytoplasmic; the sequence is VDHPKFGRRSL. Residues 374 to 394 traverse the membrane as a helical segment; the sequence is LLAGLTGMFVSTLLLVGALTI. At 395-409 the chain is on the extracellular side; it reads QNSGGDKWASYSAIG. The helical transmembrane segment at 410-430 threads the bilayer; that stretch reads FVLLFVISFATGPGAIPWFFV. Trp-427 lines the D-glucose pocket. At 431 to 445 the chain is on the cytoplasmic side; it reads SEIFDSSARGNANSI. A helical membrane pass occupies residues 446–464; it reads AVMVNWAANLLVGLTFLPI. The Extracellular portion of the chain corresponds to 465–470; it reads NNLMQQ. A helical transmembrane segment spans residues 471-491; sequence YSFFIFSGFLAFFIFYTWKFV. Residues 492-510 are Cytoplasmic-facing; the sequence is PETKGKSIEQIQAEFEKRK.

This sequence belongs to the major facilitator superfamily. Sugar transporter (TC 2.A.1.1) family. Glucose transporter subfamily. Isoform a is expressed in pharyngeal muscle and intestinal cells in both embryos and adults (at protein level).

The protein localises to the cell membrane. The protein resides in the basolateral cell membrane. Functionally, facilitative glucose transporter that plays a role in glucose metabolism and regulation of longevity. May also play a role in lipid metabolism. Glucose transport activity of isoform a is competitively inhibited by mannose, galactose and fructose, suggesting ability to transport also other hexose sugars. The chain is Facilitated glucose transporter protein 1 from Caenorhabditis elegans.